Here is a 212-residue protein sequence, read N- to C-terminus: PQMMGIPLILIAIILPMLLMFTSSTRLSSNRMTTMQLWVMNTITKQLFLPVNMPGHKWAAMLITLMIFLLSMNMLGLLPYTFTPTTQLSMNMALAAPLWLATVLTGLRNQPTASLGHLLPEGTPTPLIPLLIIIETVSLFIRPLALGVRLTANLTAGHLLIQLISTAAFVLMPTMPMAALSTLIVLMLLTGLEIAVAMIQAYVFTLLLTLYL.

6 helical membrane passes run 3-23 (MMGI…MFTS), 58-78 (WAAM…LGLL), 87-107 (QLSM…LTGL), 128-148 (IPLL…ALGV), 154-174 (LTAG…LMPT), and 179-199 (ALST…VAMI).

This sequence belongs to the ATPase A chain family. As to quaternary structure, component of the ATP synthase complex composed at least of ATP5F1A/subunit alpha, ATP5F1B/subunit beta, ATP5MC1/subunit c (homooctomer), MT-ATP6/subunit a, MT-ATP8/subunit 8, ATP5ME/subunit e, ATP5MF/subunit f, ATP5MG/subunit g, ATP5MK/subunit k, ATP5MJ/subunit j, ATP5F1C/subunit gamma, ATP5F1D/subunit delta, ATP5F1E/subunit epsilon, ATP5PF/subunit F6, ATP5PB/subunit b, ATP5PD/subunit d, ATP5PO/subunit OSCP. ATP synthase complex consists of a soluble F(1) head domain (subunits alpha(3) and beta(3)) - the catalytic core - and a membrane F(0) domain - the membrane proton channel (subunits c, a, 8, e, f, g, k and j). These two domains are linked by a central stalk (subunits gamma, delta, and epsilon) rotating inside the F1 region and a stationary peripheral stalk (subunits F6, b, d, and OSCP). Interacts with DNAJC30; interaction is direct.

It is found in the mitochondrion inner membrane. The catalysed reaction is H(+)(in) = H(+)(out). Its function is as follows. Subunit a, of the mitochondrial membrane ATP synthase complex (F(1)F(0) ATP synthase or Complex V) that produces ATP from ADP in the presence of a proton gradient across the membrane which is generated by electron transport complexes of the respiratory chain. ATP synthase complex consist of a soluble F(1) head domain - the catalytic core - and a membrane F(1) domain - the membrane proton channel. These two domains are linked by a central stalk rotating inside the F(1) region and a stationary peripheral stalk. During catalysis, ATP synthesis in the catalytic domain of F(1) is coupled via a rotary mechanism of the central stalk subunits to proton translocation. With the subunit c (ATP5MC1), forms the proton-conducting channel in the F(0) domain, that contains two crucial half-channels (inlet and outlet) that facilitate proton movement from the mitochondrial intermembrane space (IMS) into the matrix. Protons are taken up via the inlet half-channel and released through the outlet half-channel, following a Grotthuss mechanism. The sequence is that of ATP synthase F(0) complex subunit a from Tropidurus montanus (Lizard).